The primary structure comprises 68 residues: Large ribosomal subunit protein bL35 (68 aa).

The span at 1 to 25 shows a compositional bias: basic residues; sequence MGTKIKTHKGTKKRFRLSAKGKAMH. The disordered stretch occupies residues 1-43; sequence MGTKIKTHKGTKKRFRLSAKGKAMHRQSGTSHLAKGLSKKRRR.

The protein belongs to the bacterial ribosomal protein bL35 family.

In Rhodopirellula baltica (strain DSM 10527 / NCIMB 13988 / SH1), this protein is Large ribosomal subunit protein bL35.